The primary structure comprises 455 residues: Beta-cyclopiazonate dehydrogenase (455 aa).

Residues 1–20 form the signal peptide; the sequence is MATRIASFIGISTVASLALA.

Belongs to the beta-cyclopiazonate dehydrogenase family. FAD serves as cofactor.

It carries out the reaction beta-cyclopiazonate + A = alpha-cyclopiazonate + AH2. Beta-cyclopiazonate dehydrogenase involved in the synthesis of the fungal neurotoxin alpha-cyclopiazonic acid (CPA). CpaO carries out the dehydrogenation of beta-CPA to yield an unstable enimine product, which is captured by intramolecular cyclization to create the pentacyclic fused scaffold of alpha-cyclopiazonate. This Aspergillus flavus (strain ATCC 200026 / FGSC A1120 / IAM 13836 / NRRL 3357 / JCM 12722 / SRRC 167) protein is Beta-cyclopiazonate dehydrogenase.